A 181-amino-acid chain; its full sequence is Large ribosomal subunit protein uL6 (181 aa).

This sequence belongs to the universal ribosomal protein uL6 family. Part of the 50S ribosomal subunit.

This protein binds to the 23S rRNA, and is important in its secondary structure. It is located near the subunit interface in the base of the L7/L12 stalk, and near the tRNA binding site of the peptidyltransferase center. In Flavobacterium psychrophilum (strain ATCC 49511 / DSM 21280 / CIP 103535 / JIP02/86), this protein is Large ribosomal subunit protein uL6.